The following is a 477-amino-acid chain: UDP-N-acetylmuramate--L-alanine ligase (477 aa).

122 to 128 (GTHGKTT) contributes to the ATP binding site.

This sequence belongs to the MurCDEF family.

The protein localises to the cytoplasm. The catalysed reaction is UDP-N-acetyl-alpha-D-muramate + L-alanine + ATP = UDP-N-acetyl-alpha-D-muramoyl-L-alanine + ADP + phosphate + H(+). It participates in cell wall biogenesis; peptidoglycan biosynthesis. Its function is as follows. Cell wall formation. This is UDP-N-acetylmuramate--L-alanine ligase from Xanthomonas campestris pv. campestris (strain 8004).